A 333-amino-acid polypeptide reads, in one-letter code: MEERIVSAEATELEEQSEQGLRPKRLADYIGQETVKHNLAVFMEAAKMREEALDHVLLYGPPGLGKTTLAAIIAAEMGGELRTTSGPAIERSGDLAAILTALEPGDVLFIDEIHRLNRTVEEVLYPAMEDFCLDIVIGKGPTARSVRLDLPPFTLVGATTRAGMLSSPLRDRFGVMARLEYYKPEELAQIVERSATVFQATLEPSAALELARRSRGTPRIANRLLRRVRDFAQVGGEAAISLERACSALEQLHVDPLGLDHIDDKLLKGMIEKFNGGPVGLETIAATIGEEAATIEEVYEPYLLQIGFIQRTPRGRIATPACYAHYGVEKQNG.

The interval 1-182 is large ATPase domain (RuvB-L); it reads MEERIVSAEA…FGVMARLEYY (182 aa). ATP contacts are provided by residues Leu-21, Arg-22, Gly-63, Lys-66, Thr-67, Thr-68, 129-131, Arg-172, Tyr-182, and Arg-219; that span reads EDF. Thr-67 lines the Mg(2+) pocket. The small ATPAse domain (RuvB-S) stretch occupies residues 183-253; sequence KPEELAQIVE…RACSALEQLH (71 aa). Residues 256–333 form a head domain (RuvB-H) region; sequence PLGLDHIDDK…AHYGVEKQNG (78 aa). DNA contacts are provided by Arg-311 and Arg-316.

The protein belongs to the RuvB family. In terms of assembly, homohexamer. Forms an RuvA(8)-RuvB(12)-Holliday junction (HJ) complex. HJ DNA is sandwiched between 2 RuvA tetramers; dsDNA enters through RuvA and exits via RuvB. An RuvB hexamer assembles on each DNA strand where it exits the tetramer. Each RuvB hexamer is contacted by two RuvA subunits (via domain III) on 2 adjacent RuvB subunits; this complex drives branch migration. In the full resolvosome a probable DNA-RuvA(4)-RuvB(12)-RuvC(2) complex forms which resolves the HJ.

The protein localises to the cytoplasm. It carries out the reaction ATP + H2O = ADP + phosphate + H(+). The RuvA-RuvB-RuvC complex processes Holliday junction (HJ) DNA during genetic recombination and DNA repair, while the RuvA-RuvB complex plays an important role in the rescue of blocked DNA replication forks via replication fork reversal (RFR). RuvA specifically binds to HJ cruciform DNA, conferring on it an open structure. The RuvB hexamer acts as an ATP-dependent pump, pulling dsDNA into and through the RuvAB complex. RuvB forms 2 homohexamers on either side of HJ DNA bound by 1 or 2 RuvA tetramers; 4 subunits per hexamer contact DNA at a time. Coordinated motions by a converter formed by DNA-disengaged RuvB subunits stimulates ATP hydrolysis and nucleotide exchange. Immobilization of the converter enables RuvB to convert the ATP-contained energy into a lever motion, pulling 2 nucleotides of DNA out of the RuvA tetramer per ATP hydrolyzed, thus driving DNA branch migration. The RuvB motors rotate together with the DNA substrate, which together with the progressing nucleotide cycle form the mechanistic basis for DNA recombination by continuous HJ branch migration. Branch migration allows RuvC to scan DNA until it finds its consensus sequence, where it cleaves and resolves cruciform DNA. This chain is Holliday junction branch migration complex subunit RuvB, found in Shouchella clausii (strain KSM-K16) (Alkalihalobacillus clausii).